The following is a 160-amino-acid chain: Cyclic pyranopterin monophosphate synthase (160 aa).

Residues Leu-75–His-77 and Met-113–Glu-114 each bind substrate. Residue Asp-128 is part of the active site.

The protein belongs to the MoaC family. In terms of assembly, homohexamer; trimer of dimers.

The catalysed reaction is (8S)-3',8-cyclo-7,8-dihydroguanosine 5'-triphosphate = cyclic pyranopterin phosphate + diphosphate. Its pathway is cofactor biosynthesis; molybdopterin biosynthesis. Catalyzes the conversion of (8S)-3',8-cyclo-7,8-dihydroguanosine 5'-triphosphate to cyclic pyranopterin monophosphate (cPMP). The sequence is that of Cyclic pyranopterin monophosphate synthase from Beijerinckia indica subsp. indica (strain ATCC 9039 / DSM 1715 / NCIMB 8712).